The chain runs to 668 residues: Pentatricopeptide repeat-containing protein CRP1, chloroplastic (668 aa).

Residues 1 to 64 (MPASLLPPTF…SASLTSPSPP (64 aa)) constitute a chloroplast transit peptide. PPR repeat units lie at residues 154–188 (SPLL…DFLP), 189–226 (DLAS…RLEP), 227–261 (DAPL…GLTP), 262–297 (RSNA…EIKP), 298–332 (RTRA…GVAP), 333–367 (DEAT…GVKP), 368–402 (SSYV…GVRP), 403–437 (DRHF…GIEP), 438–472 (DVVT…NCPP), 473–507 (GTTT…GLVP), 508–542 (NIIT…GLKP), 543–577 (SPTM…GLEV), 578–612 (SILV…GLRP), and 613–647 (DVIT…GCAP).

This sequence belongs to the PPR family. P subfamily. Component of a multisubunit complex.

The protein localises to the plastid. Its subcellular location is the chloroplast stroma. Its function is as follows. Required for the translation of the chloroplast petA and petD mRNAs. Required for the processing of the petD mRNA from a polycistronic precursor. Binds with high affinity to the 5'-UTR of the chloroplastic petA transcript. Activates psaC and petA translation by binding their 5'-UTRs. This chain is Pentatricopeptide repeat-containing protein CRP1, chloroplastic, found in Zea mays (Maize).